A 179-amino-acid chain; its full sequence is Large ribosomal subunit protein uL5 (179 aa).

It belongs to the universal ribosomal protein uL5 family. Part of the 50S ribosomal subunit; part of the 5S rRNA/L5/L18/L25 subcomplex. Contacts the 5S rRNA and the P site tRNA. Forms a bridge to the 30S subunit in the 70S ribosome.

Functionally, this is one of the proteins that bind and probably mediate the attachment of the 5S RNA into the large ribosomal subunit, where it forms part of the central protuberance. In the 70S ribosome it contacts protein S13 of the 30S subunit (bridge B1b), connecting the 2 subunits; this bridge is implicated in subunit movement. Contacts the P site tRNA; the 5S rRNA and some of its associated proteins might help stabilize positioning of ribosome-bound tRNAs. The chain is Large ribosomal subunit protein uL5 from Pseudomonas paraeruginosa (strain DSM 24068 / PA7) (Pseudomonas aeruginosa (strain PA7)).